A 352-amino-acid chain; its full sequence is Protein MGF 360-9L (352 aa).

The protein belongs to the asfivirus MGF 360 family. In terms of assembly, interacts with host STAT1; this interaction mediates STAT1 degradation through apoptosis. Interacts with host STAT2; this interaction mediates STAT2 degradation through the proteasome.

The protein localises to the host cytoplasm. Its function is as follows. Plays a role in virus cell tropism, and may be required for efficient virus replication in macrophages. In Ornithodoros (relapsing fever ticks), this protein is Protein MGF 360-9L.